The sequence spans 375 residues: Queuine tRNA-ribosyltransferase (375 aa).

The active-site Proton acceptor is Asp89. Residues 89–93 (DSGGF), Asp143, Gln187, and Gly214 each bind substrate. The interval 245-251 (GVGKPED) is RNA binding. Residue Asp264 is the Nucleophile of the active site. The tract at residues 269 to 273 (TRNAR) is RNA binding; important for wobble base 34 recognition. Zn(2+)-binding residues include Cys302, Cys304, Cys307, and His333.

It belongs to the queuine tRNA-ribosyltransferase family. As to quaternary structure, homodimer. Within each dimer, one monomer is responsible for RNA recognition and catalysis, while the other monomer binds to the replacement base PreQ1. The cofactor is Zn(2+).

The enzyme catalyses 7-aminomethyl-7-carbaguanine + guanosine(34) in tRNA = 7-aminomethyl-7-carbaguanosine(34) in tRNA + guanine. Its pathway is tRNA modification; tRNA-queuosine biosynthesis. Catalyzes the base-exchange of a guanine (G) residue with the queuine precursor 7-aminomethyl-7-deazaguanine (PreQ1) at position 34 (anticodon wobble position) in tRNAs with GU(N) anticodons (tRNA-Asp, -Asn, -His and -Tyr). Catalysis occurs through a double-displacement mechanism. The nucleophile active site attacks the C1' of nucleotide 34 to detach the guanine base from the RNA, forming a covalent enzyme-RNA intermediate. The proton acceptor active site deprotonates the incoming PreQ1, allowing a nucleophilic attack on the C1' of the ribose to form the product. After dissociation, two additional enzymatic reactions on the tRNA convert PreQ1 to queuine (Q), resulting in the hypermodified nucleoside queuosine (7-(((4,5-cis-dihydroxy-2-cyclopenten-1-yl)amino)methyl)-7-deazaguanosine). This is Queuine tRNA-ribosyltransferase from Salmonella typhi.